The chain runs to 447 residues: Na(+)-translocating NADH-quinone reductase subunit A (447 aa).

The protein belongs to the NqrA family. In terms of assembly, composed of six subunits; NqrA, NqrB, NqrC, NqrD, NqrE and NqrF.

The catalysed reaction is a ubiquinone + n Na(+)(in) + NADH + H(+) = a ubiquinol + n Na(+)(out) + NAD(+). In terms of biological role, NQR complex catalyzes the reduction of ubiquinone-1 to ubiquinol by two successive reactions, coupled with the transport of Na(+) ions from the cytoplasm to the periplasm. NqrA to NqrE are probably involved in the second step, the conversion of ubisemiquinone to ubiquinol. The polypeptide is Na(+)-translocating NADH-quinone reductase subunit A (Haemophilus influenzae (strain PittGG)).